Consider the following 184-residue polypeptide: ATP synthase subunit b, chloroplastic (184 aa).

A helical transmembrane segment spans residues 27–49 (LATNPINLSVVFGVLIFFGKGVL).

It belongs to the ATPase B chain family. As to quaternary structure, F-type ATPases have 2 components, F(1) - the catalytic core - and F(0) - the membrane proton channel. F(1) has five subunits: alpha(3), beta(3), gamma(1), delta(1), epsilon(1). F(0) has four main subunits: a(1), b(1), b'(1) and c(10-14). The alpha and beta chains form an alternating ring which encloses part of the gamma chain. F(1) is attached to F(0) by a central stalk formed by the gamma and epsilon chains, while a peripheral stalk is formed by the delta, b and b' chains.

It localises to the plastid. It is found in the chloroplast thylakoid membrane. Its function is as follows. F(1)F(0) ATP synthase produces ATP from ADP in the presence of a proton or sodium gradient. F-type ATPases consist of two structural domains, F(1) containing the extramembraneous catalytic core and F(0) containing the membrane proton channel, linked together by a central stalk and a peripheral stalk. During catalysis, ATP synthesis in the catalytic domain of F(1) is coupled via a rotary mechanism of the central stalk subunits to proton translocation. Functionally, component of the F(0) channel, it forms part of the peripheral stalk, linking F(1) to F(0). The sequence is that of ATP synthase subunit b, chloroplastic from Nasturtium officinale (Watercress).